The primary structure comprises 84 residues: Toxin Tst1 (84 aa).

Positions 1-19 (MKGMILFISCLLLIDIVVG) are cleaved as a signal peptide. In terms of domain architecture, LCN-type CS-alpha/beta spans 21 to 82 (KEGYLMDHEG…VWDRATNKCG (62 aa)). 4 cysteine pairs are disulfide-bonded: cysteine 31/cysteine 81, cysteine 35/cysteine 57, cysteine 43/cysteine 62, and cysteine 47/cysteine 64. Cysteine 81 is modified (cysteine amide).

In terms of tissue distribution, expressed by the venom gland.

It is found in the secreted. In terms of biological role, beta toxins bind voltage-independently at site-4 of sodium channels (Nav) and shift the voltage of activation toward more negative potentials thereby affecting sodium channel activation and promoting spontaneous and repetitive firing. This toxin is active only on mammals. Is toxic to mice. In Tityus stigmurus (Brazilian scorpion), this protein is Toxin Tst1.